The primary structure comprises 300 residues: HTH-type transcriptional regulator ArgP (300 aa).

One can recognise an HTH lysR-type domain in the interval 4 to 60; sequence FDYKLLAALAAVVEQGGFERAAQALGLSQSAVSQRIKLLEARVGQPVLVRETPPHPT. Residues 21-40 constitute a DNA-binding region (H-T-H motif); the sequence is FERAAQALGLSQSAVSQRIK.

Belongs to the LysR transcriptional regulatory family. As to quaternary structure, homodimer.

Its function is as follows. Controls the transcription of genes involved in arginine and lysine metabolism. The chain is HTH-type transcriptional regulator ArgP from Pseudomonas aeruginosa (strain UCBPP-PA14).